Reading from the N-terminus, the 471-residue chain is Glycosyl hydrolase family 109 protein 1 (471 aa).

The signal sequence occupies residues 1–15 (MIKNLSTFFVGIALS). The N-palmitoyl cysteine moiety is linked to residue cysteine 16. Cysteine 16 carries S-diacylglycerol cysteine lipidation. Residues 70-71 (MR), aspartate 92, 141-144 (WKHH), 161-162 (EV), and asparagine 190 contribute to the NAD(+) site. Substrate contacts are provided by residues tyrosine 219, arginine 235, 247-250 (YATH), and tyrosine 325. Tyrosine 247 is an NAD(+) binding site.

Belongs to the Gfo/Idh/MocA family. Glycosyl hydrolase 109 subfamily. Requires NAD(+) as cofactor.

It localises to the cell membrane. Its function is as follows. Glycosidase. The polypeptide is Glycosyl hydrolase family 109 protein 1 (Phocaeicola vulgatus (strain ATCC 8482 / DSM 1447 / JCM 5826 / CCUG 4940 / NBRC 14291 / NCTC 11154) (Bacteroides vulgatus)).